The sequence spans 175 residues: Auxin-responsive protein IAA28 (175 aa).

The tract at residues 1–39 (MEEEKRLELRLAPPCHQFTSNNNINGSKQKSSTKETSFL) is disordered. The EAR-like (transcriptional repression) signature appears at 7-11 (LELRL). Residues 17–39 (QFTSNNNINGSKQKSSTKETSFL) are compositionally biased toward polar residues. One can recognise a PB1 domain in the interval 80-161 (ELYVKINMEG…TVKRLHVLKT (82 aa)).

Belongs to the Aux/IAA family. Homodimers and heterodimers. Interacts with TPL. In terms of tissue distribution, in roots and inflorescence stems.

The protein localises to the nucleus. Its function is as follows. Aux/IAA proteins are short-lived transcriptional factors that function as repressors of early auxin response genes at low auxin concentrations. Repression is thought to result from the interaction with auxin response factors (ARFs), proteins that bind to the auxin-responsive promoter element (AuxRE). Formation of heterodimers with ARF proteins may alter their ability to modulate early auxin response genes expression. This chain is Auxin-responsive protein IAA28 (IAA28), found in Arabidopsis thaliana (Mouse-ear cress).